A 619-amino-acid polypeptide reads, in one-letter code: Very-long-chain aldehyde decarbonylase GL1-1 (619 aa).

5 helical membrane-spanning segments follow: residues 44–64 (LLLL…WSSF), 93–113 (DNFL…FPSL), 123–143 (GLAV…YAAH), 190–210 (AAAC…VLGF), and 322–342 (PFLL…WAWS). The 141-residue stretch at 129 to 269 (LLHVAATEPL…MPLFDLIGGT (141 aa)) folds into the Fatty acid hydroxylase domain.

Belongs to the sterol desaturase family. As to quaternary structure, homodimer.

It is found in the endoplasmic reticulum membrane. The enzyme catalyses a long-chain fatty aldehyde + 2 NADPH + O2 + H(+) = a long-chain alkane + formate + 2 NADP(+) + H2O. Its function is as follows. Aldehyde decarbonylase involved in the conversion of aldehydes to alkanes. Core component of a very-long-chain alkane synthesis complex. This chain is Very-long-chain aldehyde decarbonylase GL1-1, found in Oryza sativa subsp. indica (Rice).